The primary structure comprises 245 residues: 1-(5-phosphoribosyl)-5-[(5-phosphoribosylamino)methylideneamino] imidazole-4-carboxamide isomerase (245 aa).

Catalysis depends on D7, which acts as the Proton acceptor. D129 acts as the Proton donor in catalysis.

The protein belongs to the HisA/HisF family.

The protein resides in the cytoplasm. The catalysed reaction is 1-(5-phospho-beta-D-ribosyl)-5-[(5-phospho-beta-D-ribosylamino)methylideneamino]imidazole-4-carboxamide = 5-[(5-phospho-1-deoxy-D-ribulos-1-ylimino)methylamino]-1-(5-phospho-beta-D-ribosyl)imidazole-4-carboxamide. It functions in the pathway amino-acid biosynthesis; L-histidine biosynthesis; L-histidine from 5-phospho-alpha-D-ribose 1-diphosphate: step 4/9. The sequence is that of 1-(5-phosphoribosyl)-5-[(5-phosphoribosylamino)methylideneamino] imidazole-4-carboxamide isomerase from Salmonella enteritidis PT4 (strain P125109).